A 140-amino-acid chain; its full sequence is Putative nickel-responsive regulator 3 (140 aa).

The Ni(2+) site is built by histidine 81, histidine 92, histidine 94, and cysteine 100.

Belongs to the transcriptional regulatory CopG/NikR family. It depends on Ni(2+) as a cofactor.

In terms of biological role, transcriptional regulator. This chain is Putative nickel-responsive regulator 3, found in Methanosarcina acetivorans (strain ATCC 35395 / DSM 2834 / JCM 12185 / C2A).